The primary structure comprises 121 residues: uncharacterized protein (121 aa).

Residues 1–121 (MGQVLSICSS…QQEREQIKWD (121 aa)) form a disordered region. Residue Gly-2 is the site of N-myristoyl glycine attachment. Cys-8 carries the S-palmitoyl cysteine lipid modification. Basic and acidic residues-rich tracts occupy residues 11–23 (KSKEKKVVNEKPT), 73–83 (AAEKRNIEKKK), 90–105 (RQLEKERAKPMKEHLQ), and 112–121 (QQEREQIKWD).

It to yeast YGL108C. Post-translationally, myristoylated. The N-myristoylated protein is further palmitoylated.

The protein localises to the cytoplasm. It localises to the cytosol. This is an uncharacterized protein from Schizosaccharomyces pombe (strain 972 / ATCC 24843) (Fission yeast).